The chain runs to 60 residues: Large ribosomal subunit protein eL37 (60 aa).

The Zn(2+) site is built by Cys-19, Cys-22, Cys-34, and Cys-37. The segment at Cys-19–Cys-37 adopts a C4-type zinc-finger fold.

It belongs to the eukaryotic ribosomal protein eL37 family. Zn(2+) serves as cofactor.

In terms of biological role, binds to the 23S rRNA. The sequence is that of Large ribosomal subunit protein eL37 from Methanoregula boonei (strain DSM 21154 / JCM 14090 / 6A8).